Here is a 436-residue protein sequence, read N- to C-terminus: 3-ketoacyl-CoA thiolase (436 aa).

The active-site Acyl-thioester intermediate is the Cys99. Residues His392 and Cys422 each act as proton acceptor in the active site.

It belongs to the thiolase-like superfamily. Thiolase family. Heterotetramer of two alpha chains (FadJ) and two beta chains (FadI).

It is found in the cytoplasm. It catalyses the reaction an acyl-CoA + acetyl-CoA = a 3-oxoacyl-CoA + CoA. The protein operates within lipid metabolism; fatty acid beta-oxidation. Catalyzes the final step of fatty acid oxidation in which acetyl-CoA is released and the CoA ester of a fatty acid two carbons shorter is formed. This Escherichia coli O7:K1 (strain IAI39 / ExPEC) protein is 3-ketoacyl-CoA thiolase.